Here is a 223-residue protein sequence, read N- to C-terminus: Ribonuclease HII (223 aa).

The RNase H type-2 domain maps to 1–219 (MMIAGIDEAG…VENIREELEK (219 aa)). The a divalent metal cation site is built by Asp7, Glu8, and Asp105.

Belongs to the RNase HII family. Mn(2+) is required as a cofactor. The cofactor is Mg(2+).

It localises to the cytoplasm. The enzyme catalyses Endonucleolytic cleavage to 5'-phosphomonoester.. Its function is as follows. Endonuclease that specifically degrades the RNA of RNA-DNA hybrids. The protein is Ribonuclease HII of Methanosarcina acetivorans (strain ATCC 35395 / DSM 2834 / JCM 12185 / C2A).